The sequence spans 496 residues: Putative zinc finger CCCH domain-containing protein 48 (496 aa).

2 disordered regions span residues Met-1 to His-77 and Met-108 to Asp-194. Residues His-143–Tyr-156 show a composition bias toward acidic residues. 3 C3H1-type zinc fingers span residues Glu-377 to Asp-406, Lys-439 to Val-467, and Leu-469 to Tyr-496.

The chain is Putative zinc finger CCCH domain-containing protein 48 from Oryza sativa subsp. japonica (Rice).